The following is a 668-amino-acid chain: Penicillin-binding protein 3 (668 aa).

A helical transmembrane segment spans residues 7–23; it reads LLVFLCVGLIGLIGCSK. Catalysis depends on Ser-410, which acts as the Acyl-ester intermediate.

This sequence belongs to the transpeptidase family.

The protein localises to the cell membrane. The protein resides in the forespore inner membrane. It is found in the forespore outer membrane. Its subcellular location is the membrane raft. The catalysed reaction is Preferential cleavage: (Ac)2-L-Lys-D-Ala-|-D-Ala. Also transpeptidation of peptidyl-alanyl moieties that are N-acyl substituents of D-alanine.. Its pathway is cell wall biogenesis; peptidoglycan biosynthesis. Its function is as follows. Penicillin-binding proteins (PBPs) function in the late steps of murein biosynthesis. Probably required for both cortical and vegetative peptidoglycan synthesis. Although not usually required for cell division, in the absence of PBP 2B (pbpB) it becomes essential. Confers resistance to oxacillin and cephalexin. The sequence is that of Penicillin-binding protein 3 from Bacillus subtilis (strain 168).